Reading from the N-terminus, the 197-residue chain is Small ribosomal subunit protein uS4c (197 aa).

Residues 85–157 (MRLDNILFRL…LQLFTGKELA (73 aa)) form the S4 RNA-binding domain.

Belongs to the universal ribosomal protein uS4 family. As to quaternary structure, part of the 30S ribosomal subunit. Contacts protein S5. The interaction surface between S4 and S5 is involved in control of translational fidelity.

The protein resides in the plastid. In terms of biological role, one of the primary rRNA binding proteins, it binds directly to 16S rRNA where it nucleates assembly of the body of the 30S subunit. With S5 and S12 plays an important role in translational accuracy. In Cuscuta gronovii (Common dodder), this protein is Small ribosomal subunit protein uS4c (rps4).